Consider the following 256-residue polypeptide: Chorismate mutase (256 aa).

The 253-residue stretch at 3–255 (FTKPETVLNL…EVEYLLRRLE (253 aa)) folds into the Chorismate mutase domain. The L-tyrosine site is built by arginine 75 and arginine 76. Positions 138, 139, 141, and 142 each coordinate L-tryptophan. Positions 139, 141, 142, and 145 each coordinate L-tyrosine.

Homodimer.

It localises to the cytoplasm. It carries out the reaction chorismate = prephenate. Its pathway is metabolic intermediate biosynthesis; prephenate biosynthesis; prephenate from chorismate: step 1/1. With respect to regulation, each dimer has two allosteric binding sites that can bind the regulatory effectors tryptophan or tyrosine. Can bind either one tryptophan or one tyrosine, two tryptophan or two tyrosine or one tryptophan and one tyrosine, which differentially affect the catalytic activity. Activated by tryptophan and subject to feedback inhibition by tyrosine. In the presence of both tryptophan and tyrosine, the enzyme is in the activated state. Functionally, catalyzes the Claisen rearrangement of chorismate to prephenate. Acts at the first branch point in the aromatic amino acid pathway where it steers biosynthesis towards phenylalanine and tyrosine, and away from tryptophan. This chain is Chorismate mutase, found in Saccharomyces cerevisiae (strain ATCC 204508 / S288c) (Baker's yeast).